Reading from the N-terminus, the 1044-residue chain is Disease resistance protein PIK6-NP (1044 aa).

The interval L3 to V184 is structured coiled coil (CC) domain. The NB-ARC domain occupies K187–Q543. Residues Q258–M302 are disordered. 3 LRR repeats span residues L635–Y657, M682–L705, and E706–L728. The tract at residues G737–K771 is disordered. LRR repeat units lie at residues L808–S834, S840–M862, P866–I888, T889–N911, K935–S958, and M980–N1004.

This sequence belongs to the disease resistance NB-LRR family.

Its function is as follows. Probable disease resistance protein. Resistance proteins guard the plant against pathogens that contain an appropriate avirulence protein via an indirect interaction with this avirulence protein. That triggers a defense system including the hypersensitive response, which restricts the pathogen growth. At the opposite of cultivar Kusabue, the cultivar Nipponbare doesn't recognize the effector avirulence protein AVR-Pik from M.oryzae. The sequence is that of Disease resistance protein PIK6-NP from Oryza sativa subsp. japonica (Rice).